A 395-amino-acid polypeptide reads, in one-letter code: S-adenosylmethionine synthase (395 aa).

A Mg(2+)-binding site is contributed by glutamate 10. Histidine 16 provides a ligand contact to ATP. Glutamate 44 provides a ligand contact to K(+). L-methionine-binding residues include glutamate 57 and glutamine 100. ATP is bound by residues 168–170 (DGK), 236–239 (SGRF), 253–254 (RK), alanine 270, lysine 274, and lysine 278. Lysine 278 is an L-methionine binding site.

This sequence belongs to the AdoMet synthase family. In terms of assembly, homotetramer. Mn(2+) is required as a cofactor. Mg(2+) serves as cofactor. Requires Co(2+) as cofactor. The cofactor is K(+).

Its subcellular location is the cytoplasm. The catalysed reaction is L-methionine + ATP + H2O = S-adenosyl-L-methionine + phosphate + diphosphate. The protein operates within amino-acid biosynthesis; S-adenosyl-L-methionine biosynthesis; S-adenosyl-L-methionine from L-methionine: step 1/1. In terms of biological role, catalyzes the formation of S-adenosylmethionine from methionine and ATP. The reaction comprises two steps that are both catalyzed by the same enzyme: formation of S-adenosylmethionine (AdoMet) and triphosphate, and subsequent hydrolysis of the triphosphate. The sequence is that of S-adenosylmethionine synthase (METK) from Populus deltoides (Eastern poplar).